Here is a 1072-residue protein sequence, read N- to C-terminus: MAPPTGVLSSLLLLVTIAGCARKQCSEGRTYSNAVISPNLETTRIMRVSHTFPVVDCTAACCDLSSCDLAWWFEGRCYLVSCPHKENCEPKKMGPIRSYLTFVLRPVQRPAQLLDYGDMMLNRGSPSGIWGDSPEDIRKDLTFLGKDWGLEEMSEYSDDYRELEKDLLQPSGKQEPRGSAEYTDWGLLPGSEGAFNSSVGDSPAVPAETQQDPELHYLNESASTPAPKLPERSVLLPLPTTPSSGEVLEKEKASQLQEQSSNSSGKEVLMPSHSLPPASLELSSVTVEKSPVLTVTPGSTEHSIPTPPTSAAPSESTPSELPISPTTAPRTVKELTVSAGDNLIITLPDNEVELKAFVAPAPPVETTYNYEWNLISHPTDYQGEIKQGHKQTLNLSQLSVGLYVFKVTVSSENAFGEGFVNVTVKPARRVNLPPVAVVSPQLQELTLPLTSALIDGSQSTDDTEIVSYHWEEINGPFIEEKTSVDSPVLRLSNLDPGNYSFRLTVTDSDGATNSTTAALIVNNAVDYPPVANAGPNHTITLPQNSITLNGNQSSDDHQIVLYEWSLGPGSEGKHVVMQGVQTPYLHLSAMQEGDYTFQLKVTDSSRQQSTAVVTVIVQPENNRPPVAVAGPDKELIFPVESATLDGSSSSDDHGIVFYHWEHVRGPSAVEMENIDKAIATVTGLQVGTYHFRLTVKDQQGLSSTSTLTVAVKKENNSPPRARAGGRHVLVLPNNSITLDGSRSTDDQRIVSYLWIRDGQSPAAGDVIDGSDHSVALQLTNLVEGVYTFHLRVTDSQGASDTDTATVEVQPDPRKSGLVELTLQVGVGQLTEQRKDTLVRQLAVLLNVLDSDIKVQKIRAHSDLSTVIVFYVQSRPPFKVLKAAEVARNLHMRLSKEKADFLLFKVLRVDTAGCLLKCSGHGHCDPLTKRCICSHLWMENLIQRYIWDGESNCEWSIFYVTVLAFTLIVLTGGFTWLCICCCKRQKRTKIRKKTKYTILDNMDEQERMELRPKYGIKHRSTEHNSSLMVSESEFDSDQDTIFSREKMERGNPKVSMNGSIRNGASFSYCSKDR.

The signal sequence occupies residues 1–20; that stretch reads MAPPTGVLSSLLLLVTIAGC. The region spanning 21 to 99 is the MANSC domain; it reads ARKQCSEGRT…PKKMGPIRSY (79 aa). The Extracellular portion of the chain corresponds to 21 to 955; that stretch reads ARKQCSEGRT…WDGESNCEWS (935 aa). Disordered regions lie at residues 168–277 and 295–327; these read LQPS…SLPP and VTPG…SPTT. N196, N219, and N262 each carry an N-linked (GlcNAc...) asparagine glycan. The segment covering 254–265 has biased composition (polar residues); that stretch reads SQLQEQSSNSSG. Low complexity predominate over residues 311-320; the sequence is AAPSESTPSE. 5 consecutive PKD domains span residues 341–427, 435–524, 530–620, 621–714, and 720–811; these read DNLI…VKPA, VAVV…VNNA, VANA…VQPE, NNRP…VKKE, and RARA…VQPD. 6 N-linked (GlcNAc...) asparagine glycosylation sites follow: N394, N421, N498, N513, N536, and N551. N733 is a glycosylation site (N-linked (GlcNAc...) asparagine). The chain crosses the membrane as a helical span at residues 956-976; it reads IFYVTVLAFTLIVLTGGFTWL. At 977-1072 the chain is on the cytoplasmic side; that stretch reads CICCCKRQKR…ASFSYCSKDR (96 aa). An Endocytosis signal motif is present at residues 995–998; it reads YTIL. A disordered region spans residues 1045–1072; the sequence is KMERGNPKVSMNGSIRNGASFSYCSKDR. Residues 1053–1072 are compositionally biased toward polar residues; sequence VSMNGSIRNGASFSYCSKDR.

In terms of assembly, homodimer. Interacts with AP2M1; required for clathrin-mediated endocytosis. Post-translationally, N-glycosylated. O-glycosylated. In terms of processing, shedding of the extracellular domain and intramembrane cleavage produce several proteolytic products. The intramembrane cleavage releases a soluble cytoplasmic polypeptide that translocates to the nucleolus. As to expression, detected in adult brain cortex and fetal frontal lobe (at protein level). Highly expressed in brain cortex, putamen, amygdala, hippocampus and cerebellum.

Its subcellular location is the cell membrane. The protein localises to the early endosome membrane. Functionally, involved in neuronal migration during development of the cerebral neocortex. May function in a cell autonomous and a non-cell autonomous manner and play a role in appropriate adhesion between migrating neurons and radial glial fibers. May also regulate growth and differentiation of dendrites. This Homo sapiens (Human) protein is Dyslexia-associated protein KIAA0319 (KIAA0319).